The following is a 68-amino-acid chain: Sperm-associated antigen 11A (68 aa).

Positions 1–19 (MKVLLLFAVFFCLVQRNSG) are cleaved as a signal peptide. 3 disulfides stabilise this stretch: Cys-30/Cys-59, Cys-37/Cys-52, and Cys-42/Cys-60.

The protein belongs to the beta-defensin family. As to expression, only expressed in epididymis (middle part of the caput).

It is found in the secreted. Its function is as follows. Has antimicrobial activity against E.coli. Plays a role in the defense response in the male reproductive tract, contributing to sperm maturation, storage and protection. This chain is Sperm-associated antigen 11A, found in Rattus norvegicus (Rat).